Consider the following 217-residue polypeptide: Large ribosomal subunit protein uL1 (217 aa).

The residue at position 122 (K122) is an N6,N6-dimethyllysine; alternate. An N6-methyllysine; alternate modification is found at K122.

It belongs to the universal ribosomal protein uL1 family.

The protein is Large ribosomal subunit protein uL1 (rpl10a) of Dictyostelium discoideum (Social amoeba).